Here is a 314-residue protein sequence, read N- to C-terminus: Ferrochelatase (314 aa).

Fe cation is bound by residues His184 and Glu259.

This sequence belongs to the ferrochelatase family.

Its subcellular location is the cytoplasm. It carries out the reaction heme b + 2 H(+) = protoporphyrin IX + Fe(2+). It functions in the pathway porphyrin-containing compound metabolism; protoheme biosynthesis; protoheme from protoporphyrin-IX: step 1/1. Catalyzes the ferrous insertion into protoporphyrin IX. The protein is Ferrochelatase of Chlamydia trachomatis serovar A (strain ATCC VR-571B / DSM 19440 / HAR-13).